Consider the following 148-residue polypeptide: Large-conductance mechanosensitive channel (148 aa).

The next 2 helical transmembrane spans lie at 16–36 (VMDL…VNSI) and 89–109 (GSFI…FLMV).

This sequence belongs to the MscL family. Homopentamer.

It is found in the cell inner membrane. Channel that opens in response to stretch forces in the membrane lipid bilayer. May participate in the regulation of osmotic pressure changes within the cell. The sequence is that of Large-conductance mechanosensitive channel from Paraburkholderia xenovorans (strain LB400).